We begin with the raw amino-acid sequence, 129 residues long: Small ribosomal subunit protein uS9 (129 aa).

Belongs to the universal ribosomal protein uS9 family.

In Chlorobium phaeovibrioides (strain DSM 265 / 1930) (Prosthecochloris vibrioformis (strain DSM 265)), this protein is Small ribosomal subunit protein uS9.